We begin with the raw amino-acid sequence, 399 residues long: MAPAADSPTLQPAQPSDLNQYRGYDHVHWYVGNAKQAATYYVTRMGFERVAYRGLETGSKAVASHVVRNGNITFILTSPLRSVEQASRFPEDEALLKEIHAHLERHGDGVKDVAFEVDCVESVFSAAVRNGAEVVSDVRTVEDEDGQIKMATIRTYGETTHTLIERSGYRGGFMPGYRMESNADATSKFLPKVVLERIDHCVGNQDWDEMERVCDYYEKILGFHRFWSVDDKDICTEFSALKSIVMASPNDIVKMPINEPAKGKKQSQIEEYVDFYNGAGVQHIALRTNNIIDAITNLKARGTEFIKVPETYYEDMKIRLKRQGLVLDEDFETLKSLDILIDFDENGYLLQLFTKHLMDRPTVFIEIIQRNNFSGFGAGNFRALFEAIEREQALRGTLI.

2 consecutive VOC domains span residues 23-166 (GYDH…LIER) and 197-355 (RIDH…LFTK). Residues His-200, His-283, and Glu-366 each coordinate Fe cation.

This sequence belongs to the 4HPPD family. Fe cation serves as cofactor.

It carries out the reaction 3-(4-hydroxyphenyl)pyruvate + O2 = homogentisate + CO2. Its pathway is amino-acid degradation; L-phenylalanine degradation; acetoacetate and fumarate from L-phenylalanine: step 3/6. The chain is 4-hydroxyphenylpyruvate dioxygenase (TCRP) from Coccidioides posadasii (strain C735) (Valley fever fungus).